Reading from the N-terminus, the 430-residue chain is C4-dicarboxylate transport protein (430 aa).

Helical transmembrane passes span 8–28 (SLYFQVLAAITIGILLGHFYP), 44–64 (LIKMIIAPVIFCTVVTGIAGM), 76–96 (AALLYFEVVSTIALIIGLVVV), 144–164 (AFASGNILQVLLFAVMFGFAL), 184–204 (VIFGVINMIMKLAPLGAFGAM), 222–242 (LILCFYLTCILFVFLVLGSIA), 289–309 (VVGLVIPTGYSFNLDGTSIYL), 326–346 (IWHQITLLVVLLLSSKGAAGV), and 352–372 (IVLAATLSAVGHLPVAGLALI).

Belongs to the dicarboxylate/amino acid:cation symporter (DAACS) (TC 2.A.23) family.

The protein resides in the cell inner membrane. Responsible for the transport of dicarboxylates such as succinate, fumarate, and malate from the periplasm across the membrane. This is C4-dicarboxylate transport protein from Pectobacterium atrosepticum (strain SCRI 1043 / ATCC BAA-672) (Erwinia carotovora subsp. atroseptica).